The following is a 452-amino-acid chain: 1,3-beta-glucanosyltransferase gel1 (452 aa).

The first 19 residues, 1–19 (MKASAVTAALAVGASTVLA), serve as a signal peptide directing secretion. Cys-71 and Cys-100 are joined by a disulfide. Tyr-89, Asn-159, Glu-160, Asp-201, and Arg-206 together coordinate (1,3-beta-D-glucosyl)n. Glu-160 acts as the Proton donor in catalysis. Disulfide bonds link Cys-215–Cys-345 and Cys-233–Cys-264. Asn-249 is a glycosylation site (N-linked (GlcNAc...) asparagine). The active-site Nucleophile is Glu-261. Tyr-292 is a (1,3-beta-D-glucosyl)n binding site. A compositionally biased stretch (polar residues) spans 325 to 340 (EKTSNPSGDGNYNKTG). The interval 325–419 (EKTSNPSGDG…SGTSTSSKGA (95 aa)) is disordered. Residue Asn-337 is glycosylated (N-linked (GlcNAc...) asparagine). Residues 393 to 419 (STATAEPGSGSATGSSSSGTSTSSKGA) are compositionally biased toward low complexity. Ala-419 carries GPI-like-anchor amidated alanine lipidation. Residues 420-452 (AAGLTVPSLTMAPVVVGAVTLLSTVFGAGLVLL) constitute a propeptide, removed in mature form.

This sequence belongs to the glycosyl hydrolase 72 family. In terms of processing, the GPI-like anchor contains a phosphoceramide lipid group.

The protein resides in the cell membrane. Its function is as follows. Splits internally a 1,3-beta-glucan molecule and transfers the newly generated reducing end (the donor) to the non-reducing end of another 1,3-beta-glucan molecule (the acceptor) forming a 1,3-beta linkage, resulting in the elongation of 1,3-beta-glucan chains in the cell wall. Involved in cell wall morphogenesis. The sequence is that of 1,3-beta-glucanosyltransferase gel1 (gel1) from Aspergillus fumigatus (strain ATCC MYA-4609 / CBS 101355 / FGSC A1100 / Af293) (Neosartorya fumigata).